Here is a 339-residue protein sequence, read N- to C-terminus: MSSSSSSGAATGFAVCSDPQKSFSKMFKRTVILLAGPTGSGKTAVSLKLAPLVDGEIISVDSMQVYQGMDIGTAKVSLADRKEVPHHLIDVCHVQESFNAVDFYYHAVQACQDILSRNKVPILVGGTGFYFHTFLSGPPSGPSPDFVLREQLTLEAQERGISALYQELELLDPVYAATITKHDKNKIIRALEIIRKTGSKVSSYAWQSTVNESKEYHCRGWLLSPDPELLRHNILERCDQMLEEGLLDEVQALLAAGIKGNSSASRAIGYREWIEFLDLGSPPDLFEITKQKFITNTWRYTKKQRTWFKRCSLFRELRPMGMTLDDMAKKIAQDYFLCG.

36–43 serves as a coordination point for ATP; the sequence is GPTGSGKT. A substrate-binding site is contributed by 38–43; it reads TGSGKT. An interaction with substrate tRNA region spans residues 61 to 64; the sequence is DSMQ.

This sequence belongs to the IPP transferase family. In terms of assembly, monomer. The cofactor is Mg(2+).

The enzyme catalyses adenosine(37) in tRNA + dimethylallyl diphosphate = N(6)-dimethylallyladenosine(37) in tRNA + diphosphate. Catalyzes the transfer of a dimethylallyl group onto the adenine at position 37 in tRNAs that read codons beginning with uridine, leading to the formation of N6-(dimethylallyl)adenosine (i(6)A). In Chlamydia trachomatis serovar A (strain ATCC VR-571B / DSM 19440 / HAR-13), this protein is tRNA dimethylallyltransferase.